A 276-amino-acid polypeptide reads, in one-letter code: Undecaprenyl-diphosphatase 2 (276 aa).

8 consecutive transmembrane segments (helical) span residues 1–21, 44–64, 87–107, 114–134, 150–170, 190–210, 222–242, and 251–271; these read MSLW…LFPV, QLLP…LWYF, GHLM…GLLL, VFHD…LLWL, MTFK…IPGF, AAEF…VLEL, DALL…RFLM, and LASF…WFML.

Belongs to the UppP family.

It is found in the cell inner membrane. It catalyses the reaction di-trans,octa-cis-undecaprenyl diphosphate + H2O = di-trans,octa-cis-undecaprenyl phosphate + phosphate + H(+). Catalyzes the dephosphorylation of undecaprenyl diphosphate (UPP). Confers resistance to bacitracin. This chain is Undecaprenyl-diphosphatase 2, found in Burkholderia orbicola (strain AU 1054).